Reading from the N-terminus, the 109-residue chain is Ferredoxin (109 aa).

2 4Fe-4S ferredoxin-type domains span residues Thr2–Glu30 and Phe31–Pro60. 2 residues coordinate [3Fe-4S] cluster: Cys9 and Cys17. Positions 21, 40, 43, and 46 each coordinate [4Fe-4S] cluster. Residue Cys50 coordinates [3Fe-4S] cluster.

Requires [4Fe-4S] cluster as cofactor. The cofactor is [3Fe-4S] cluster.

Functionally, ferredoxins are iron-sulfur proteins that transfer electrons in a wide variety of metabolic reactions. The polypeptide is Ferredoxin (fdxA) (Rickettsia prowazekii (strain Madrid E)).